Reading from the N-terminus, the 925-residue chain is Isoleucine--tRNA ligase (925 aa).

The short motif at 57–67 (PYANGDIHMGH) is the 'HIGH' region element. Glu556 is an L-isoleucyl-5'-AMP binding site. Residues 597–601 (KMSKS) carry the 'KMSKS' region motif. Lys600 serves as a coordination point for ATP. Residues Cys890, Cys893, Cys910, and Cys913 each contribute to the Zn(2+) site.

This sequence belongs to the class-I aminoacyl-tRNA synthetase family. IleS type 1 subfamily. Monomer. It depends on Zn(2+) as a cofactor.

The protein resides in the cytoplasm. It catalyses the reaction tRNA(Ile) + L-isoleucine + ATP = L-isoleucyl-tRNA(Ile) + AMP + diphosphate. Functionally, catalyzes the attachment of isoleucine to tRNA(Ile). As IleRS can inadvertently accommodate and process structurally similar amino acids such as valine, to avoid such errors it has two additional distinct tRNA(Ile)-dependent editing activities. One activity is designated as 'pretransfer' editing and involves the hydrolysis of activated Val-AMP. The other activity is designated 'posttransfer' editing and involves deacylation of mischarged Val-tRNA(Ile). The protein is Isoleucine--tRNA ligase of Carboxydothermus hydrogenoformans (strain ATCC BAA-161 / DSM 6008 / Z-2901).